We begin with the raw amino-acid sequence, 341 residues long: Allergen Mag (341 aa).

The chain is Allergen Mag (MAG) from Dermatophagoides farinae (American house dust mite).